The primary structure comprises 245 residues: tRNA1(Val) (adenine(37)-N6)-methyltransferase (245 aa).

It belongs to the methyltransferase superfamily. tRNA (adenine-N(6)-)-methyltransferase family.

It is found in the cytoplasm. It catalyses the reaction adenosine(37) in tRNA1(Val) + S-adenosyl-L-methionine = N(6)-methyladenosine(37) in tRNA1(Val) + S-adenosyl-L-homocysteine + H(+). Functionally, specifically methylates the adenine in position 37 of tRNA(1)(Val) (anticodon cmo5UAC). The sequence is that of tRNA1(Val) (adenine(37)-N6)-methyltransferase from Escherichia coli O157:H7.